The sequence spans 170 residues: Thialysine N-epsilon-acetyltransferase (170 aa).

Positions 4–168 constitute an N-acetyltransferase domain; the sequence is VRIREAKEGD…FQGEATRKLA (165 aa). 27–28 contributes to the substrate binding site; the sequence is FE. K29 carries the post-translational modification N6-acetyllysine. E92 lines the substrate pocket. Acetyl-CoA contacts are provided by residues 94 to 96, 102 to 107, 133 to 135, and Y140; these read IYV, GQGIGS, and NQR. Residue Y140 is the Proton donor of the active site. E152 lines the substrate pocket.

This sequence belongs to the acetyltransferase family. As to quaternary structure, homodimer. Widely expressed. Under physiological conditions, SSAT2 is expressed at lower level that SSAT1 (SSAT). Many tissues express only SSAT1, several tissues express both SSAT1 and SSAT2, and bone, cervix, ovary and pineal gland expressed only SSAT2.

The protein localises to the cytoplasm. It carries out the reaction S-(2-aminoethyl)-L-cysteine + acetyl-CoA = S-(2-acetamidoethyl)-L-cysteine + CoA + H(+). The catalysed reaction is an alkane-alpha,omega-diamine + acetyl-CoA = an N-acetylalkane-alpha,omega-diamine + CoA + H(+). Its function is as follows. Catalyzes the N-acetylation of the amino acid thialysine (S-(2-aminoethyl)-L-cysteine), a L-lysine analog with the 4-methylene group substituted with a sulfur. May also catalyze acetylation of polyamines, such as norspermidine, spermidine or spermine. However, ability to acetylate polyamines is weak, suggesting that it does not act as a diamine acetyltransferase in vivo. This Homo sapiens (Human) protein is Thialysine N-epsilon-acetyltransferase.